The sequence spans 455 residues: Killer cell immunoglobulin-like receptor 3DL2 (455 aa).

The first 21 residues, 1 to 21 (MSLTVVSMACVGFFLLQGAWP), serve as a signal peptide directing secretion. Over 22-340 (LMGGQDKPFL…SKSGICRHLH (319 aa)) the chain is Extracellular. 3 consecutive Ig-like C2-type domains span residues 42 to 102 (GGHV…RPHS), 137 to 202 (GETV…VPHS), and 237 to 300 (GENV…FRAL). 2 cysteine pairs are disulfide-bonded: cysteine 49–cysteine 95 and cysteine 144–cysteine 195. Residues asparagine 179, asparagine 239, asparagine 273, and asparagine 306 are each glycosylated (N-linked (GlcNAc...) asparagine). Cysteines 244 and 293 form a disulfide. A helical transmembrane segment spans residues 341-360 (VLIGTSVVIFLFILLLFFLL). The Cytoplasmic segment spans residues 361–455 (YRWCSNKKNA…APQSGLEGVF (95 aa)).

The protein belongs to the immunoglobulin superfamily. In terms of assembly, interacts with peptide-free HLA-F open conformer. Expressed in astrocytes.

Its subcellular location is the cell membrane. Its function is as follows. Receptor on natural killer (NK) cells and T cells for MHC class I molecules. Upon binding of peptide-free HLA-F open conformer, negatively regulates NK and T cell effector functions. Acts as a receptor on astrocytes for HLA-F. Through interaction with HLA-F, may protect motor neurons from astrocyte-induced toxicity. This Homo sapiens (Human) protein is Killer cell immunoglobulin-like receptor 3DL2.